We begin with the raw amino-acid sequence, 493 residues long: Probable glycine dehydrogenase (decarboxylating) subunit 2 (493 aa).

N6-(pyridoxal phosphate)lysine is present on Lys-269.

It belongs to the GcvP family. C-terminal subunit subfamily. The glycine cleavage system is composed of four proteins: P, T, L and H. In this organism, the P 'protein' is a heterodimer of two subunits. It depends on pyridoxal 5'-phosphate as a cofactor.

It catalyses the reaction N(6)-[(R)-lipoyl]-L-lysyl-[glycine-cleavage complex H protein] + glycine + H(+) = N(6)-[(R)-S(8)-aminomethyldihydrolipoyl]-L-lysyl-[glycine-cleavage complex H protein] + CO2. The glycine cleavage system catalyzes the degradation of glycine. The P protein binds the alpha-amino group of glycine through its pyridoxal phosphate cofactor; CO(2) is released and the remaining methylamine moiety is then transferred to the lipoamide cofactor of the H protein. This Chloroherpeton thalassium (strain ATCC 35110 / GB-78) protein is Probable glycine dehydrogenase (decarboxylating) subunit 2.